The primary structure comprises 187 residues: Large ribosomal subunit protein mL49 (187 aa).

Belongs to the mitochondrion-specific ribosomal protein mL49 family.

It localises to the mitochondrion. This is Large ribosomal subunit protein mL49 (mrpl-49) from Caenorhabditis elegans.